The primary structure comprises 844 residues: MELWRQCTHWLIQCRVLPPSHRVTWDGAQVCELAQALRDGVLLCQLLNNLLPHAINLREVNLRPQMSQFLCLKNIRTFLSTCYEKFGLKRSELFEAFDLFDVQDFGKVIYTLSALSWTPIAQNKGIMPFPTEESVGDEDIYSGLSDQIDDTVEEDEDLYDCVENEEAEGDEVYEDLMRSEPVPMPPKMTEYDKRCCCLREIQQTEEKYTDTLGSIQQHFMKPLQRFLKPQDVEIIFINIEDLLRVHTHFLKEMKEALANPGASTLYQVFIKYKERFLIYGRYCSQVESASKHLDRVATAREDVQMKLEECSQRANNGRFTLRDLLMVPMQRVLKYHLLLQELVKHTQDAMEKDNLRLALDAMRDLAQCVNEVKRDNETLRQITNFQLSIENLDQSLAHYGRPKIDGELKITSVERRSKMDRYAFLLDKALLICKRRGDTYDLKDFVNLHSFQVRDDSSGERDNKKWTHMFLLIEDQGAQGYELFFKTRELKKKWMEQFEMAISNIYPENATANGHDFQMFSFEETTSCKACQMLLRGTFYQGYRCQRCRAPAHKECLGRVPPCGRHGQDYSGTMKKDKPHRRAQDKKRNELGLPKMEVCQEYYGLPPPPGAIGPFLRLNPGDIVELTKAEAEQNWWEGRNISTNEVGWFPCNRVKPYVHGPPQDLSVHLWYAGPMERAGAESILTNRSDGTFLVRQRVKDAAEFAISIKYNVEVKHIKIMTAEGLYRITEKKAFRGLTELVEFYQQNSLKDCFKSLDTTLQFPFKEPERRAINKPSAGSIKIFGTAKARYDFCARDRSELSLKEGDIVKILNKKGQQGWWRGEIYGRIGWFPSNYVEEDYSEYC.

Positions 1–119 (MELWRQCTHW…YTLSALSWTP (119 aa)) constitute a Calponin-homology (CH) domain. Residues 193-372 (KRCCCLREIQ…RDLAQCVNEV (180 aa)) form the DH domain. The region spanning 401 to 503 (RPKIDGELKI…WMEQFEMAIS (103 aa)) is the PH domain. The Phorbol-ester/DAG-type zinc-finger motif lies at 514–563 (GHDFQMFSFEETTSCKACQMLLRGTFYQGYRCQRCRAPAHKECLGRVPPC). Residues 567–589 (GQDYSGTMKKDKPHRRAQDKKRN) are disordered. The 69-residue stretch at 591–659 (LGLPKMEVCQ…PCNRVKPYVH (69 aa)) folds into the SH3 1 domain. The SH2 domain occupies 670–764 (WYAGPMERAG…SLDTTLQFPF (95 aa)). In terms of domain architecture, SH3 2 spans 781–841 (KIFGTAKARY…PSNYVEEDYS (61 aa)). A phosphotyrosine mark is found at Tyr-825 and Tyr-843.

Interacts with SHB. Interacts with APS, DOCK2, GRB2, GRB3, DOCK2, SLA, TEC and ZNF655/VIK. Interacts with SIAH2; without leading to its degradation. Associates with BLNK, PLCG1, GRB2 and NCK1 in a B-cell antigen receptor-dependent fashion. Interacts with CBLB; which inhibits tyrosine phosphorylation and down-regulates activity. May interact with CCPG1. Interacts with CLNK. Interacts with THEMIS2. Interacts with NEK3 and this interaction is prolactin-dependent. Interacts with ITK. Interacts with PTK2B/PYK2. Interacts with HCK. Interacts with PTK2B/PYK2. Interacts (via SH2 domain) with SYK. Interacts with ANKRD54. Interacts with CD6. Interacts with LCP2; this interaction plays a role in TCR-mediated cytokine production. In terms of processing, phosphorylated by FYN. Phosphorylated on tyrosine residues by HCK in response to IFNG and bacterial lipopolysaccharide (LPS).

Couples tyrosine kinase signals with the activation of the Rho/Rac GTPases, thus leading to cell differentiation and/or proliferation. The sequence is that of Proto-oncogene vav (VAV1) from Bos taurus (Bovine).